The sequence spans 419 residues: MSIGVQSSGINISHAGLSRLVDAGKSEQGDKAVRDDGRALARADAALAAVVGERVAARRDAVAGSGAQRVELARPKPDAQTRATDRRTVSGLEREHKRLAASQTPRVTGMHDALVQRHVSLDGAKAAHGEGVKRAAGDAPRAAADAPQRFAFADDKAFDAMLALGAAMQKNVQSDLAMQGKLTMLAHDAMMSAAAQDRSIGAAQMTAAIAGGALQATTSLGGAMQQMKSLSTKSMSIEKELKPQAELKQFHAEQALELRGINKPVLSNDEVSHVKIKRDTGETVRHEIDHGGERMSDEHASVLAQEAPARQHRIDMHGMRHEENLVKAGRQQMKGDLLQSGGQIGKNQIDGASAQQQGADRAEQKEDENAQQTAMAAASTRDEAAHRSREAAQKAIDAAKSQVANDNAVAAQVAGNLRT.

Disordered stretches follow at residues 62 to 91 (VAGSGAQRVELARPKPDAQTRATDRRTVSG) and 338 to 402 (LQSG…AKSQ). 2 stretches are compositionally biased toward basic and acidic residues: residues 71 to 91 (ELARPKPDAQTRATDRRTVSG) and 380 to 392 (TRDEAAHRSREAA).

The protein belongs to the SctB/SipC family.

Its subcellular location is the secreted. The protein is Effector protein BipC (bipC) of Burkholderia pseudomallei (strain 1106a).